The following is a 135-amino-acid chain: Large ribosomal subunit protein uL16c (135 aa).

This sequence belongs to the universal ribosomal protein uL16 family. Part of the 50S ribosomal subunit.

Its subcellular location is the plastid. The protein localises to the chloroplast. In Olimarabidopsis pumila (Dwarf rocket), this protein is Large ribosomal subunit protein uL16c.